Here is a 68-residue protein sequence, read N- to C-terminus: Metallothionein-3 (68 aa).

M1 carries the N-acetylmethionine modification. The tract at residues 1-30 is beta; that stretch reads MDPETCPCPSGGSCTCADSCKCEGCKCTSC. Residues C6, C8, C14, C16, C20, C22, C25, C27, and C30 each coordinate a divalent metal cation. Positions 31–68 are alpha; that stretch reads KKSCCSCCPAECEKCAKDCVCKGGEGAEAEAEKCSCCE. Phosphoserine is present on S33. A divalent metal cation is bound by residues C34, C35, C37, C38, C42, C45, C49, C51, C64, C66, and C67.

The protein belongs to the metallothionein superfamily. Type 1 family.

In terms of biological role, binds heavy metals. Contains five zinc and one copper atoms per polypeptide chain and only a negligible amount of cadmium. This is Metallothionein-3 (MT3) from Macaca fascicularis (Crab-eating macaque).